Here is an 852-residue protein sequence, read N- to C-terminus: Taste receptor type 1 member 3 (852 aa).

Residues methionine 1–glycine 20 form the signal peptide. The Extracellular portion of the chain corresponds to alanine 21 to leucine 570. N-linked (GlcNAc...) asparagine glycosylation is found at asparagine 85, asparagine 130, asparagine 264, asparagine 285, asparagine 380, asparagine 411, asparagine 432, and asparagine 475. Residues isoleucine 536–glutamate 545 form a required for brazzein responsiveness region. The helical transmembrane segment at leucine 571–valine 591 threads the bilayer. The Cytoplasmic segment spans residues histidine 592 to glycine 603. Residues glycine 604–phenylalanine 624 traverse the membrane as a helical segment. Topologically, residues proline 625 to leucine 639 are extracellular. Residues serine 640–valine 660 traverse the membrane as a helical segment. Over glutamate 661 to tryptophan 682 the chain is Cytoplasmic. A helical transmembrane segment spans residues leucine 683 to phenylalanine 703. The Extracellular segment spans residues proline 704–serine 729. A helical membrane pass occupies residues phenylalanine 730–leucine 750. Residues valine 751–arginine 762 lie on the Cytoplasmic side of the membrane. A helical transmembrane segment spans residues glycine 763–alanine 783. Topologically, residues asparagine 784 to leucine 789 are extracellular. Residues arginine 790–histidine 810 form a helical membrane-spanning segment. Residues leucine 811–glutamate 852 are Cytoplasmic-facing.

It belongs to the G-protein coupled receptor 3 family. TAS1R subfamily. Forms homodimers or heterodimers with TAS1R1 and TAS1R2.

Its subcellular location is the cell membrane. Functionally, putative taste receptor. TAS1R1/TAS1R3 responds to the umami taste stimulus (the taste of monosodium glutamate). TAS1R2/TAS1R3 recognizes diverse natural and synthetic sweeteners. TAS1R3 is essential for the recognition and response to the disaccharide trehalose. Sequence differences within and between species can significantly influence the selectivity and specificity of taste responses. This is Taste receptor type 1 member 3 (TAS1R3) from Homo sapiens (Human).